The primary structure comprises 164 residues: UPF0114 protein YqhA (164 aa).

Transmembrane regions (helical) follow at residues 15–35 (LLAPVYFGLSLALVALALKFF), 53–73 (LILVLLSLVDMTLVGGLLVMV), and 136–156 (LMWYVIIHLTFVLSAFVMGYL).

The protein belongs to the UPF0114 family.

The protein resides in the cell membrane. The sequence is that of UPF0114 protein YqhA from Escherichia coli O139:H28 (strain E24377A / ETEC).